Here is a 397-residue protein sequence, read N- to C-terminus: Homoserine O-acetyltransferase (397 aa).

The region spanning Asn-58–Leu-368 is the AB hydrolase-1 domain. Ser-164 (nucleophile) is an active-site residue. Arg-233 contacts substrate. Residues Asp-331 and His-364 contribute to the active site. Residue Asp-365 participates in substrate binding.

It belongs to the AB hydrolase superfamily. MetX family. As to quaternary structure, homodimer.

Its subcellular location is the cytoplasm. The catalysed reaction is L-homoserine + acetyl-CoA = O-acetyl-L-homoserine + CoA. The protein operates within amino-acid biosynthesis; L-methionine biosynthesis via de novo pathway; O-acetyl-L-homoserine from L-homoserine: step 1/1. Functionally, transfers an acetyl group from acetyl-CoA to L-homoserine, forming acetyl-L-homoserine. This is Homoserine O-acetyltransferase from Solidesulfovibrio magneticus (strain ATCC 700980 / DSM 13731 / RS-1) (Desulfovibrio magneticus).